We begin with the raw amino-acid sequence, 203 residues long: Peptidyl-tRNA hydrolase (203 aa).

Position 18 (Tyr18) interacts with tRNA. The active-site Proton acceptor is His23. TRNA is bound by residues Tyr69, Asn71, and Asn117.

This sequence belongs to the PTH family. In terms of assembly, monomer.

The protein resides in the cytoplasm. The enzyme catalyses an N-acyl-L-alpha-aminoacyl-tRNA + H2O = an N-acyl-L-amino acid + a tRNA + H(+). Functionally, hydrolyzes ribosome-free peptidyl-tRNAs (with 1 or more amino acids incorporated), which drop off the ribosome during protein synthesis, or as a result of ribosome stalling. Its function is as follows. Catalyzes the release of premature peptidyl moieties from peptidyl-tRNA molecules trapped in stalled 50S ribosomal subunits, and thus maintains levels of free tRNAs and 50S ribosomes. The sequence is that of Peptidyl-tRNA hydrolase from Parasynechococcus marenigrum (strain WH8102).